The chain runs to 76 residues: Translational regulator CsrA (76 aa).

It belongs to the CsrA/RsmA family. In terms of assembly, homodimer; the beta-strands of each monomer intercalate to form a hydrophobic core, while the alpha-helices form wings that extend away from the core.

It is found in the cytoplasm. In terms of biological role, a translational regulator that binds mRNA to regulate translation initiation and/or mRNA stability. Usually binds in the 5'-UTR at or near the Shine-Dalgarno sequence preventing ribosome-binding, thus repressing translation. Its main target seems to be the major flagellin gene, while its function is anatagonized by FliW. The sequence is that of Translational regulator CsrA from Helicobacter pylori (strain J99 / ATCC 700824) (Campylobacter pylori J99).